The sequence spans 437 residues: Pyrophosphate--fructose 6-phosphate 1-phosphotransferase (437 aa).

Glycine 27 contacts diphosphate. Position 122 (aspartate 122) interacts with Mg(2+). Substrate contacts are provided by residues 147-149 (TID), 193-195 (MGR), glutamate 261, and 323-326 (YELR). Aspartate 149 functions as the Proton acceptor in the catalytic mechanism.

It belongs to the phosphofructokinase type A (PFKA) family. PPi-dependent PFK group II subfamily. Clade 'Short' sub-subfamily. As to quaternary structure, homotetramer. It depends on Mg(2+) as a cofactor. Requires Mn(2+) as cofactor.

Its subcellular location is the cytoplasm. It carries out the reaction beta-D-fructose 6-phosphate + diphosphate = beta-D-fructose 1,6-bisphosphate + phosphate + H(+). It participates in carbohydrate degradation; glycolysis; D-glyceraldehyde 3-phosphate and glycerone phosphate from D-glucose: step 3/4. With respect to regulation, activated by AMP. Probably promotes oligomerization of the enzyme. Its function is as follows. Catalyzes the phosphorylation of D-fructose 6-phosphate, the first committing step of glycolysis. Uses inorganic phosphate (PPi) as phosphoryl donor instead of ATP like common ATP-dependent phosphofructokinases (ATP-PFKs), which renders the reaction reversible, and can thus function both in glycolysis and gluconeogenesis. Consistently, PPi-PFK can replace the enzymes of both the forward (ATP-PFK) and reverse (fructose-bisphosphatase (FBPase)) reactions. In Naegleria fowleri (Brain eating amoeba), this protein is Pyrophosphate--fructose 6-phosphate 1-phosphotransferase.